Here is a 515-residue protein sequence, read N- to C-terminus: 2-isopropylmalate synthase (515 aa).

Positions 5–267 (VIIFDTTLRD…STGIKHEEIH (263 aa)) constitute a Pyruvate carboxyltransferase domain. Mn(2+) contacts are provided by Asp14, His202, His204, and Asn238. Residues 392–515 (KLNYLSVQSG…EMKQKKIATV (124 aa)) are regulatory domain.

The protein belongs to the alpha-IPM synthase/homocitrate synthase family. LeuA type 1 subfamily. As to quaternary structure, homodimer. Requires Mn(2+) as cofactor.

It localises to the cytoplasm. The catalysed reaction is 3-methyl-2-oxobutanoate + acetyl-CoA + H2O = (2S)-2-isopropylmalate + CoA + H(+). It participates in amino-acid biosynthesis; L-leucine biosynthesis; L-leucine from 3-methyl-2-oxobutanoate: step 1/4. Its function is as follows. Catalyzes the condensation of the acetyl group of acetyl-CoA with 3-methyl-2-oxobutanoate (2-ketoisovalerate) to form 3-carboxy-3-hydroxy-4-methylpentanoate (2-isopropylmalate). The sequence is that of 2-isopropylmalate synthase from Vibrio parahaemolyticus serotype O3:K6 (strain RIMD 2210633).